The following is a 392-amino-acid chain: Anhydro-N-acetylmuramic acid kinase (392 aa).

19–26 (GTSVDGID) is a binding site for ATP.

This sequence belongs to the anhydro-N-acetylmuramic acid kinase family.

It catalyses the reaction 1,6-anhydro-N-acetyl-beta-muramate + ATP + H2O = N-acetyl-D-muramate 6-phosphate + ADP + H(+). Its pathway is amino-sugar metabolism; 1,6-anhydro-N-acetylmuramate degradation. It participates in cell wall biogenesis; peptidoglycan recycling. Its function is as follows. Catalyzes the specific phosphorylation of 1,6-anhydro-N-acetylmuramic acid (anhMurNAc) with the simultaneous cleavage of the 1,6-anhydro ring, generating MurNAc-6-P. Is required for the utilization of anhMurNAc either imported from the medium or derived from its own cell wall murein, and thus plays a role in cell wall recycling. This Trichormus variabilis (strain ATCC 29413 / PCC 7937) (Anabaena variabilis) protein is Anhydro-N-acetylmuramic acid kinase.